The sequence spans 476 residues: Bifunctional protein HldE (476 aa).

The ribokinase stretch occupies residues methionine 1–glycine 319. Asparagine 195 to glutamate 198 is a binding site for ATP. Residue aspartate 264 is part of the active site. The interval methionine 344–aspartate 476 is cytidylyltransferase.

The protein in the N-terminal section; belongs to the carbohydrate kinase PfkB family. In the C-terminal section; belongs to the cytidylyltransferase family. Homodimer.

It catalyses the reaction D-glycero-beta-D-manno-heptose 7-phosphate + ATP = D-glycero-beta-D-manno-heptose 1,7-bisphosphate + ADP + H(+). The catalysed reaction is D-glycero-beta-D-manno-heptose 1-phosphate + ATP + H(+) = ADP-D-glycero-beta-D-manno-heptose + diphosphate. It participates in nucleotide-sugar biosynthesis; ADP-L-glycero-beta-D-manno-heptose biosynthesis; ADP-L-glycero-beta-D-manno-heptose from D-glycero-beta-D-manno-heptose 7-phosphate: step 1/4. It functions in the pathway nucleotide-sugar biosynthesis; ADP-L-glycero-beta-D-manno-heptose biosynthesis; ADP-L-glycero-beta-D-manno-heptose from D-glycero-beta-D-manno-heptose 7-phosphate: step 3/4. In terms of biological role, catalyzes the phosphorylation of D-glycero-D-manno-heptose 7-phosphate at the C-1 position to selectively form D-glycero-beta-D-manno-heptose-1,7-bisphosphate. Its function is as follows. Catalyzes the ADP transfer from ATP to D-glycero-beta-D-manno-heptose 1-phosphate, yielding ADP-D-glycero-beta-D-manno-heptose. The sequence is that of Bifunctional protein HldE from Actinobacillus succinogenes (strain ATCC 55618 / DSM 22257 / CCUG 43843 / 130Z).